A 377-amino-acid chain; its full sequence is Copper-containing nitrite reductase (377 aa).

The segment at residues 1–35 is a signal peptide (tat-type signal); sequence MTNTLQMTRRTMLTGAAVAGALTPILTSGGGNASP. Plastocyanin-like domains are found at residues 99-194 and 259-360; these read MTFD…IMVL and GAVG…FKVT. Positions 132, 137, 172, 173, 182, 187, and 343 each coordinate Cu cation.

It belongs to the multicopper oxidase family. In terms of assembly, homotrimer. Cu(2+) serves as cofactor. The cofactor is Cu(+). FAD is required as a cofactor. In terms of processing, predicted to be exported by the Tat system. The position of the signal peptide cleavage has not been experimentally proven.

It localises to the periplasm. It carries out the reaction nitric oxide + Fe(III)-[cytochrome c] + H2O = Fe(II)-[cytochrome c] + nitrite + 2 H(+). Its pathway is nitrogen metabolism; nitrate reduction (denitrification); dinitrogen from nitrate: step 2/4. This chain is Copper-containing nitrite reductase (nirK), found in Rhizobium sullae (Rhizobium hedysari).